We begin with the raw amino-acid sequence, 311 residues long: Glutaminase (311 aa).

Positions 66, 116, 162, 169, 193, 245, and 263 each coordinate substrate.

It belongs to the glutaminase family. As to quaternary structure, homotetramer.

The catalysed reaction is L-glutamine + H2O = L-glutamate + NH4(+). The polypeptide is Glutaminase (Rhodopseudomonas palustris (strain HaA2)).